The primary structure comprises 164 residues: uncharacterized protein (164 aa).

Residues 1–22 (MKTNRSLVVIVSLITATLLLTA) form the signal peptide. Residue Cys-23 is the site of N-palmitoyl cysteine attachment. The S-diacylglycerol cysteine moiety is linked to residue Cys-23.

The protein resides in the cell membrane. This is an uncharacterized protein from Escherichia coli (strain K12).